An 827-amino-acid polypeptide reads, in one-letter code: Periplasmic nitrate reductase (827 aa).

The tat-type signal signal peptide spans 1-32 (MNLSRRDFMKANAALAAASVAGLIIPVKNVNA). The 57-residue stretch at 37 to 93 (ITWDKAVCRFCGTGCAVLVGTKDGRVVASQGDPDAEVNRGLNCIKGYFLPKIMYGKD) folds into the 4Fe-4S Mo/W bis-MGD-type domain. Positions 44, 47, 51, and 79 each coordinate [4Fe-4S] cluster. Residues lysine 81, glutamine 148, asparagine 173, cysteine 177, 210–217 (WGSNMAEM), 242–246 (STFEH), 261–263 (QSD), methionine 372, glutamine 376, asparagine 482, 508–509 (SD), lysine 531, aspartate 558, and 717–726 (TGRILEHWHT) contribute to the Mo-bis(molybdopterin guanine dinucleotide) site. Position 793 (phenylalanine 793) interacts with substrate. Mo-bis(molybdopterin guanine dinucleotide)-binding residues include asparagine 801 and lysine 818.

The protein belongs to the prokaryotic molybdopterin-containing oxidoreductase family. NasA/NapA/NarB subfamily. In terms of assembly, component of the periplasmic nitrate reductase NapAB complex composed of NapA and NapB. The cofactor is [4Fe-4S] cluster. Mo-bis(molybdopterin guanine dinucleotide) serves as cofactor. Post-translationally, predicted to be exported by the Tat system. The position of the signal peptide cleavage has not been experimentally proven.

The protein resides in the periplasm. It catalyses the reaction 2 Fe(II)-[cytochrome] + nitrate + 2 H(+) = 2 Fe(III)-[cytochrome] + nitrite + H2O. Its function is as follows. Catalytic subunit of the periplasmic nitrate reductase complex NapAB. Receives electrons from NapB and catalyzes the reduction of nitrate to nitrite. The polypeptide is Periplasmic nitrate reductase (Histophilus somni (strain 129Pt) (Haemophilus somnus)).